The following is a 292-amino-acid chain: Small ribosomal subunit biogenesis GTPase RsgA (292 aa).

The 158-residue stretch at Arg-64–Leu-221 folds into the CP-type G domain. GTP-binding positions include Asn-113 to Asp-116 and Gly-164 to Thr-172. 4 residues coordinate Zn(2+): Cys-245, Cys-250, His-252, and Cys-258.

The protein belongs to the TRAFAC class YlqF/YawG GTPase family. RsgA subfamily. Monomer. Associates with 30S ribosomal subunit, binds 16S rRNA. The cofactor is Zn(2+).

It localises to the cytoplasm. Functionally, one of several proteins that assist in the late maturation steps of the functional core of the 30S ribosomal subunit. Helps release RbfA from mature subunits. May play a role in the assembly of ribosomal proteins into the subunit. Circularly permuted GTPase that catalyzes slow GTP hydrolysis, GTPase activity is stimulated by the 30S ribosomal subunit. The polypeptide is Small ribosomal subunit biogenesis GTPase RsgA (Clostridium botulinum (strain 657 / Type Ba4)).